The sequence spans 312 residues: Pantothenate kinase (312 aa).

97-104 (GSVAVGKS) is a binding site for ATP.

The protein belongs to the prokaryotic pantothenate kinase family.

It localises to the cytoplasm. The catalysed reaction is (R)-pantothenate + ATP = (R)-4'-phosphopantothenate + ADP + H(+). The protein operates within cofactor biosynthesis; coenzyme A biosynthesis; CoA from (R)-pantothenate: step 1/5. The protein is Pantothenate kinase of Mycobacterium marinum (strain ATCC BAA-535 / M).